The primary structure comprises 476 residues: MAFGKSHRDPYATSVGHLIEKATFAGVQTEDWGQFMHICDIINTTQDGPKDAVKALKKRISKNYNHKEIQLTLSLIDMCVQNCGPSFQSLIVKKEFVKENLVKLLNPRYNLPLDIQNRILNFIKTWSQGFPGGVDVSEVKEVYLDLVKKGVQFPPSEAEAETARQETAQISSNPPTSVPTAPALSSVIAPKNSTVTLVPEQIGKLHSELDMVKMNVRVMSAILMENTPGSENHEDIELLQKLYKTGREMQERIMDLLVVVENEDVTVELIQVNEDLNNAILGYERFTRNQQRILEQNKNQKEATNTTSEPSAPSQDLLDLSPSPRMPRATLGELNTMNNQLSGLNFSLPSSDVTNNLKPSLHPQMNLLALENTEIPPFAQRTSQNLTSSHAYDNFLEHSNSVFLQPVSLQTIAAAPSNQSLPPLPSNHPAMTKSDLQPPNYYEVMEFDPLAPAVTTEAIYEEIDAHQHKGAQNDGD.

Positions 22–154 (ATFAGVQTED…DLVKKGVQFP (133 aa)) constitute a VHS domain. The interval 155–179 (PSEAEAETARQETAQISSNPPTSVP) is disordered. A compositionally biased stretch (polar residues) spans 170–179 (ISSNPPTSVP). Position 171 is a phosphoserine (serine 171). Positions 200–288 (EQIGKLHSEL…AILGYERFTR (89 aa)) constitute a GAT domain. A compositionally biased stretch (polar residues) spans 298 to 314 (KNQKEATNTTSEPSAPS). The segment at 298–327 (KNQKEATNTTSEPSAPSQDLLDLSPSPRMP) is disordered. Serine 314, serine 321, and serine 323 each carry phosphoserine. The segment at 392-395 (YDNF) is interaction with GRB2. The SH3-binding signature appears at 421–425 (LPPLP). The interaction with PIK3R1 stretch occupies residues 442 to 445 (YEVM). Phosphotyrosine is present on tyrosine 460. Positions 460–463 (YEEI) match the SH2-binding motif.

This sequence belongs to the TOM1 family. In terms of assembly, interacts with FYN, GRB2 and PIK3R1 when phosphorylated. Interacts with LYN. Phosphorylated on tyrosines by FYN and LYN.

The protein localises to the golgi apparatus. The protein resides in the golgi stack. It is found in the endosome membrane. It localises to the cytoplasm. Its subcellular location is the membrane. In terms of biological role, probable adapter protein involved in signaling pathways. Interacts with the SH2 and SH3 domains of various signaling proteins when it is phosphorylated. May promote FYN activation, possibly by disrupting intramolecular SH3-dependent interactions. This Homo sapiens (Human) protein is TOM1-like protein 1 (TOM1L1).